The primary structure comprises 609 residues: Beta-(1--&gt;2)glucan export ATP-binding/permease protein NdvA (609 aa).

Residues 21-311 form the ABC transmembrane type-1 domain; the sequence is GWILAGANLL…VVSFINSVFM (291 aa). Helical transmembrane passes span 22 to 42, 68 to 88, 146 to 166, 167 to 187, 248 to 268, and 285 to 305; these read WILA…PVLF, LLAV…TVAL, EHFA…YINW, RLAI…TLVV, WWAV…LAIF, and IVMF…VVSF. Residues 345–579 enclose the ABC transporter domain; it reads VEFNDVSFSY…GGHFAQLAKA (235 aa). Residue 378–385 participates in ATP binding; sequence GPTGAGKS.

It belongs to the ABC transporter superfamily. Beta-(1--&gt;2)glucan exporter (TC 3.A.1.108.1) family. In terms of assembly, homodimer.

The protein resides in the cell inner membrane. The enzyme catalyses [(1-&gt;2)-beta-D-glucosyl](n)(in) + ATP + H2O = [(1-&gt;2)-beta-D-glucosyl](n)(out) + ADP + phosphate + H(+). Involved in beta-(1--&gt;2)glucan export. Transmembrane domains (TMD) form a pore in the inner membrane and the ATP-binding domain (NBD) is responsible for energy generation. The protein is Beta-(1--&gt;2)glucan export ATP-binding/permease protein NdvA of Nitrobacter winogradskyi (strain ATCC 25391 / DSM 10237 / CIP 104748 / NCIMB 11846 / Nb-255).